The primary structure comprises 268 residues: Indole-3-glycerol phosphate synthase (268 aa).

The protein belongs to the TrpC family.

The enzyme catalyses 1-(2-carboxyphenylamino)-1-deoxy-D-ribulose 5-phosphate + H(+) = (1S,2R)-1-C-(indol-3-yl)glycerol 3-phosphate + CO2 + H2O. It participates in amino-acid biosynthesis; L-tryptophan biosynthesis; L-tryptophan from chorismate: step 4/5. The sequence is that of Indole-3-glycerol phosphate synthase from Acinetobacter baumannii (strain SDF).